A 303-amino-acid polypeptide reads, in one-letter code: Probable 5-dehydro-4-deoxyglucarate dehydratase (303 aa).

The protein belongs to the DapA family.

The catalysed reaction is 5-dehydro-4-deoxy-D-glucarate + H(+) = 2,5-dioxopentanoate + CO2 + H2O. It participates in carbohydrate acid metabolism; D-glucarate degradation; 2,5-dioxopentanoate from D-glucarate: step 2/2. In Acidovorax ebreus (strain TPSY) (Diaphorobacter sp. (strain TPSY)), this protein is Probable 5-dehydro-4-deoxyglucarate dehydratase.